The chain runs to 389 residues: Succinate--CoA ligase [ADP-forming] subunit beta (389 aa).

The ATP-grasp domain occupies 9–244 (KEILRKFGVA…LDEEDPAEVE (236 aa)). Residues lysine 46, 53–55 (GRG), glutamate 99, alanine 102, and glutamate 107 each bind ATP. Residues asparagine 199 and aspartate 213 each coordinate Mg(2+). Substrate contacts are provided by residues asparagine 264 and 321–323 (GIM).

This sequence belongs to the succinate/malate CoA ligase beta subunit family. In terms of assembly, heterotetramer of two alpha and two beta subunits. Requires Mg(2+) as cofactor.

The catalysed reaction is succinate + ATP + CoA = succinyl-CoA + ADP + phosphate. It catalyses the reaction GTP + succinate + CoA = succinyl-CoA + GDP + phosphate. Its pathway is carbohydrate metabolism; tricarboxylic acid cycle; succinate from succinyl-CoA (ligase route): step 1/1. Its function is as follows. Succinyl-CoA synthetase functions in the citric acid cycle (TCA), coupling the hydrolysis of succinyl-CoA to the synthesis of either ATP or GTP and thus represents the only step of substrate-level phosphorylation in the TCA. The beta subunit provides nucleotide specificity of the enzyme and binds the substrate succinate, while the binding sites for coenzyme A and phosphate are found in the alpha subunit. The sequence is that of Succinate--CoA ligase [ADP-forming] subunit beta from Paraburkholderia xenovorans (strain LB400).